The following is a 652-amino-acid chain: DNA ligase (652 aa).

Residues 29-33, 78-79, and E107 contribute to the NAD(+) site; these read DSDYD and SL. Catalysis depends on K109, which acts as the N6-AMP-lysine intermediate. R130, E164, K278, and K302 together coordinate NAD(+). Zn(2+) is bound by residues C395, C398, C413, and C418. Positions 577–652 constitute a BRCT domain; the sequence is NSDAALFGLT…IEDEDWLRKF (76 aa).

The protein belongs to the NAD-dependent DNA ligase family. LigA subfamily. Requires Mg(2+) as cofactor. The cofactor is Mn(2+).

It catalyses the reaction NAD(+) + (deoxyribonucleotide)n-3'-hydroxyl + 5'-phospho-(deoxyribonucleotide)m = (deoxyribonucleotide)n+m + AMP + beta-nicotinamide D-nucleotide.. In terms of biological role, DNA ligase that catalyzes the formation of phosphodiester linkages between 5'-phosphoryl and 3'-hydroxyl groups in double-stranded DNA using NAD as a coenzyme and as the energy source for the reaction. It is essential for DNA replication and repair of damaged DNA. This Streptococcus pyogenes serotype M6 (strain ATCC BAA-946 / MGAS10394) protein is DNA ligase.